Here is a 92-residue protein sequence, read N- to C-terminus: DNA-directed RNA polymerase subunit omega (92 aa).

The protein belongs to the RNA polymerase subunit omega family. The RNAP catalytic core consists of 2 alpha, 1 beta, 1 beta' and 1 omega subunit. When a sigma factor is associated with the core the holoenzyme is formed, which can initiate transcription.

The enzyme catalyses RNA(n) + a ribonucleoside 5'-triphosphate = RNA(n+1) + diphosphate. Functionally, promotes RNA polymerase assembly. Latches the N- and C-terminal regions of the beta' subunit thereby facilitating its interaction with the beta and alpha subunits. This Shewanella oneidensis (strain ATCC 700550 / JCM 31522 / CIP 106686 / LMG 19005 / NCIMB 14063 / MR-1) protein is DNA-directed RNA polymerase subunit omega.